A 513-amino-acid chain; its full sequence is ATP synthase subunit alpha (513 aa).

169–176 (GDRQTGKT) serves as a coordination point for ATP.

It belongs to the ATPase alpha/beta chains family. In terms of assembly, F-type ATPases have 2 components, CF(1) - the catalytic core - and CF(0) - the membrane proton channel. CF(1) has five subunits: alpha(3), beta(3), gamma(1), delta(1), epsilon(1). CF(0) has three main subunits: a(1), b(2) and c(9-12). The alpha and beta chains form an alternating ring which encloses part of the gamma chain. CF(1) is attached to CF(0) by a central stalk formed by the gamma and epsilon chains, while a peripheral stalk is formed by the delta and b chains.

It is found in the cell inner membrane. The enzyme catalyses ATP + H2O + 4 H(+)(in) = ADP + phosphate + 5 H(+)(out). In terms of biological role, produces ATP from ADP in the presence of a proton gradient across the membrane. The alpha chain is a regulatory subunit. This is ATP synthase subunit alpha from Ruthia magnifica subsp. Calyptogena magnifica.